The primary structure comprises 394 residues: uncharacterized protein (394 aa).

Residues 7–51 form the F-box domain; the sequence is RKVIPNMPDLILRKIFDQYDYPVLCKMERVCRRWTNIINSKFRKE.

This is an uncharacterized protein from Caenorhabditis elegans.